The primary structure comprises 321 residues: Glucokinase (321 aa).

9-14 serves as a coordination point for ATP; it reads ADIGGT.

It belongs to the bacterial glucokinase family.

It localises to the cytoplasm. The enzyme catalyses D-glucose + ATP = D-glucose 6-phosphate + ADP + H(+). This chain is Glucokinase, found in Saccharophagus degradans (strain 2-40 / ATCC 43961 / DSM 17024).